The sequence spans 188 residues: GTPase KRas (188 aa).

Residues 10–18 (GAGGVGKSA), 29–35 (VDEYDPT), 59–60 (AG), and 116–119 (NKCD) each bind GTP. The short motif at 32–40 (YDPTIEDSY) is the Effector region element. Residues 167–188 (KEKMSKEGKKKKKKSKTKCVLM) form a disordered region. Cysteine 185 carries the cysteine methyl ester modification. Cysteine 185 is lipidated: S-farnesyl cysteine. Positions 186–188 (VLM) are cleaved as a propeptide — removed in mature form.

The protein belongs to the small GTPase superfamily. Ras family.

Its subcellular location is the cell membrane. The protein resides in the cytoplasm. It carries out the reaction GTP + H2O = GDP + phosphate + H(+). With respect to regulation, alternates between an inactive form bound to GDP and an active form bound to GTP. Activated by a guanine nucleotide-exchange factor (GEF) and inactivated by a GTPase-activating protein (GAP). Its function is as follows. Ras proteins bind GDP/GTP and possess intrinsic GTPase activity. Plays an important role in the regulation of cell proliferation. May play a role in promoting oncogenic events by inducing transcriptional silencing of tumor suppressor genes (TSGs). The sequence is that of GTPase KRas (kras) from Cyprinus carpio (Common carp).